Consider the following 395-residue polypeptide: S-adenosylmethionine synthase (395 aa).

Residue H18 participates in ATP binding. Residue D20 participates in Mg(2+) binding. A K(+)-binding site is contributed by E46. L-methionine-binding residues include E59 and Q103. Residues Q103–S113 form a flexible loop region. ATP is bound by residues D170–K172, K235–F236, D244, R250–K251, A267, and K271. Residue D244 participates in L-methionine binding. Residue K275 coordinates L-methionine.

Belongs to the AdoMet synthase family. As to quaternary structure, homotetramer; dimer of dimers. The cofactor is Mg(2+). K(+) is required as a cofactor.

The protein resides in the cytoplasm. The catalysed reaction is L-methionine + ATP + H2O = S-adenosyl-L-methionine + phosphate + diphosphate. Its pathway is amino-acid biosynthesis; S-adenosyl-L-methionine biosynthesis; S-adenosyl-L-methionine from L-methionine: step 1/1. Its function is as follows. Catalyzes the formation of S-adenosylmethionine (AdoMet) from methionine and ATP. The overall synthetic reaction is composed of two sequential steps, AdoMet formation and the subsequent tripolyphosphate hydrolysis which occurs prior to release of AdoMet from the enzyme. The polypeptide is S-adenosylmethionine synthase (Granulibacter bethesdensis (strain ATCC BAA-1260 / CGDNIH1)).